Reading from the N-terminus, the 96-residue chain is MDKEVTKIESDDTSSVEIKVLLFARARELTGVPDLTLKMPSGSTTQKCLDELVLKFPSLEEVRSCVVLALNEEYTTDSAIVQHRDELAIIPPISGG.

The residue at position 96 (Gly96) is a 1-thioglycine; alternate. The residue at position 96 (Gly96) is a Glycyl adenylate; alternate.

It belongs to the MoaD family. MOCS2A subfamily. As to quaternary structure, heterotetramer; composed of 2 small (MOCS2A) and 2 large (MOCS2B) subunits. C-terminal thiocarboxylation occurs in 2 steps, it is first acyl-adenylated (-COAMP) via the hesA/moeB/thiF part of MOCS3, then thiocarboxylated (-COSH) via the rhodanese domain of MOCS3.

The protein resides in the cytoplasm. The protein operates within cofactor biosynthesis; molybdopterin biosynthesis. In terms of biological role, acts as a sulfur carrier required for molybdopterin biosynthesis. Component of the molybdopterin synthase complex that catalyzes the conversion of precursor Z into molybdopterin by mediating the incorporation of 2 sulfur atoms into precursor Z to generate a dithiolene group. In the complex, serves as sulfur donor by being thiocarboxylated (-COSH) at its C-terminus by MOCS3. After interaction with MOCS2B, the sulfur is then transferred to precursor Z to form molybdopterin. The chain is Molybdopterin synthase sulfur carrier subunit from Arabidopsis thaliana (Mouse-ear cress).